An 89-amino-acid polypeptide reads, in one-letter code: Small ribosomal subunit protein uS15 (89 aa).

The protein belongs to the universal ribosomal protein uS15 family. As to quaternary structure, part of the 30S ribosomal subunit. Forms a bridge to the 50S subunit in the 70S ribosome, contacting the 23S rRNA.

Functionally, one of the primary rRNA binding proteins, it binds directly to 16S rRNA where it helps nucleate assembly of the platform of the 30S subunit by binding and bridging several RNA helices of the 16S rRNA. In terms of biological role, forms an intersubunit bridge (bridge B4) with the 23S rRNA of the 50S subunit in the ribosome. The chain is Small ribosomal subunit protein uS15 from Chlorobaculum tepidum (strain ATCC 49652 / DSM 12025 / NBRC 103806 / TLS) (Chlorobium tepidum).